Consider the following 298-residue polypeptide: GTP cyclohydrolase FolE2 (298 aa).

The protein belongs to the GTP cyclohydrolase IV family.

The enzyme catalyses GTP + H2O = 7,8-dihydroneopterin 3'-triphosphate + formate + H(+). Its pathway is cofactor biosynthesis; 7,8-dihydroneopterin triphosphate biosynthesis; 7,8-dihydroneopterin triphosphate from GTP: step 1/1. Converts GTP to 7,8-dihydroneopterin triphosphate. This Neisseria meningitidis serogroup C (strain 053442) protein is GTP cyclohydrolase FolE2.